A 127-amino-acid polypeptide reads, in one-letter code: Large ribosomal subunit protein bL17 (127 aa).

This sequence belongs to the bacterial ribosomal protein bL17 family. Part of the 50S ribosomal subunit. Contacts protein L32.

The polypeptide is Large ribosomal subunit protein bL17 (Photobacterium profundum (strain SS9)).